The following is a 704-amino-acid chain: Polyribonucleotide nucleotidyltransferase 4 (704 aa).

The Mg(2+) site is built by Asp483 and Asp489. Positions Pro550–Ile609 constitute a KH domain. The region spanning Gly619–Lys687 is the S1 motif domain.

The protein belongs to the polyribonucleotide nucleotidyltransferase family. Mg(2+) serves as cofactor.

Its subcellular location is the cytoplasm. The catalysed reaction is RNA(n+1) + phosphate = RNA(n) + a ribonucleoside 5'-diphosphate. Functionally, involved in mRNA degradation. Catalyzes the phosphorolysis of single-stranded polyribonucleotides processively in the 3'- to 5'-direction. The sequence is that of Polyribonucleotide nucleotidyltransferase 4 from Alkaliphilus metalliredigens (strain QYMF).